Here is a 436-residue protein sequence, read N- to C-terminus: Alpha-galactosidase mel1 (436 aa).

A signal peptide spans 1 to 24 (MISISFLNCFFLVFLFLFFSDVHG). Cys45 and Cys77 are oxidised to a cystine. The N-linked (GlcNAc...) asparagine glycan is linked to Asn84. Cys126 and Cys156 are oxidised to a cystine. Asp154 acts as the Nucleophile in catalysis. Asn180 carries an N-linked (GlcNAc...) asparagine glycan. The active-site Proton donor is the Asp214.

It belongs to the glycosyl hydrolase 27 family.

The protein localises to the endoplasmic reticulum lumen. It is found in the secreted. It catalyses the reaction Hydrolysis of terminal, non-reducing alpha-D-galactose residues in alpha-D-galactosides, including galactose oligosaccharides, galactomannans and galactolipids.. Its function is as follows. Secreted alpha-galactosidase required for catabolic conversion of melibiose to glucose and galactose. The chain is Alpha-galactosidase mel1 (mel1) from Schizosaccharomyces pombe (strain 972 / ATCC 24843) (Fission yeast).